The following is an 824-amino-acid chain: RelA-associated inhibitor (824 aa).

The residue at position 1 (Met1) is an N-acetylmethionine. Disordered regions lie at residues 48–87 (SLWS…SPQK) and 99–271 (RSES…YERL). Phosphoserine occurs at positions 84, 100, 102, 110, 113, 119, and 120. Thr123 is subject to Phosphothreonine. Position 134 is a phosphoserine (Ser134). Omega-N-methylarginine occurs at positions 137, 142, 144, 160, 167, and 180. Ser183, Ser187, and Ser203 each carry phosphoserine. The residue at position 205 (Arg205) is an Omega-N-methylarginine. The residue at position 275 (Thr275) is a Phosphothreonine. Phosphoserine is present on Ser279. 2 disordered regions span residues 291–370 (SLDG…RPIP) and 388–501 (RAVL…QTVP). Thr307 carries the post-translational modification Phosphothreonine. Phosphoserine occurs at positions 315, 331, and 338. A Phosphothreonine modification is found at Thr340. Residues 359–370 (QPRSTPRQRPIP) are compositionally biased toward low complexity. Pro residues predominate over residues 400-424 (APPPKLPPQPPPQPQMQPQPQPQPQ). Low complexity predominate over residues 425 to 440 (MQPQSQAQPQTPAPQQ). Residues Ser522, Ser563, and Ser593 each carry the phosphoserine modification. Residues 547-614 (FHRHGGPGPG…SVLRKVGSPR (68 aa)) form a disordered region. The segment covering 575 to 597 (PPAPAPPAPIPPPAPPQSSPPEQ) has biased composition (pro residues). ANK repeat units follow at residues 655 to 684 (EGIT…NVNS) and 688 to 717 (HGWT…AIFA). The SH3 domain maps to 754–816 (MHNGVVYALW…PRNYFGLFPR (63 aa)).

The protein belongs to the iASPP family. In terms of assembly, interacts with TP63 and TP73. Interacts with RELA NF-kappa-B subunit and with SP1 via its C-terminal part. Interacts (via SH3 domain and ANK repeats) with p53/TP53; the interaction inhibits pro-apoptotic activity of p53/TP53. In terms of tissue distribution, most abundant in skin with high levels also found in heart, testis and stomach. In 15.5 dpc embryonic heart, expressed at higher levels in atria than ventricles.

The protein resides in the cytoplasm. The protein localises to the nucleus. Its function is as follows. Regulator that plays a central role in regulation of apoptosis and transcription via its interaction with NF-kappa-B and p53/TP53 proteins. Inhibits p53/TP53 function, possibly by preventing the association between p53/TP53 and ASPP1 or ASPP2, and therefore suppressing the subsequent activation of apoptosis. Is involved in NF-kappa-B dependent negative regulation of inflammatory response. The polypeptide is RelA-associated inhibitor (Mus musculus (Mouse)).